Consider the following 371-residue polypeptide: Probable G protein-coupled receptor 85 (371 aa).

The Extracellular segment spans residues 1–26 (MANYSHAGDHNILQNVSPLATFLKLT). N3 carries N-linked (GlcNAc...) asparagine glycosylation. A helical transmembrane segment spans residues 27 to 47 (SLGFIIGVGVVGNLLISILLV). The Cytoplasmic portion of the chain corresponds to 48–58 (KDKSLHRAPYY). The chain crosses the membrane as a helical span at residues 59-79 (FLLDLCASDILRSAICFPFVF). Residues 80–96 (TSVKNGSAWTYGTLTCK) lie on the Extracellular side of the membrane. N-linked (GlcNAc...) asparagine glycosylation occurs at N84. Cysteines 95 and 173 form a disulfide. The helical transmembrane segment at 97-117 (VIAFLGVLSCFHTAFMLFCVS) threads the bilayer. Residues 118–138 (VTRYLAIAHHRFYTKRLTFWT) are Cytoplasmic-facing. The helical transmembrane segment at 139 to 159 (CLAVICMVWTLSVAMAFPPVL) threads the bilayer. At 160-189 (DVGTYSFIREEDQCTFQHRSFRANDSLGFM) the chain is on the extracellular side. N-linked (GlcNAc...) asparagine glycosylation occurs at N183. A helical transmembrane segment spans residues 190–210 (LLLALILLATQLVYLKLIFFV). Residues 211–287 (HDRRKMKPVQ…FKTEKRISRM (77 aa)) are Cytoplasmic-facing. Residues 288–308 (FYIITFFFLSLWGPYLVACYW) traverse the membrane as a helical segment. The Extracellular portion of the chain corresponds to 309–321 (RVFARGPVIPGGY). The helical transmembrane segment at 322–342 (LTAAVWMSFAQAGVNPFICIF) threads the bilayer. Topologically, residues 343–371 (SNRELRRCFSTTLLYCRKSRLPREPYCVI) are cytoplasmic.

The protein belongs to the G-protein coupled receptor 1 family.

It localises to the cell membrane. Its function is as follows. Orphan receptor. The chain is Probable G protein-coupled receptor 85 (gpr85) from Danio rerio (Zebrafish).